The primary structure comprises 136 residues: Putative pre-16S rRNA nuclease (136 aa).

The protein belongs to the YqgF nuclease family.

The protein localises to the cytoplasm. Its function is as follows. Could be a nuclease involved in processing of the 5'-end of pre-16S rRNA. This is Putative pre-16S rRNA nuclease from Francisella tularensis subsp. novicida (strain U112).